The primary structure comprises 143 residues: Transcriptional regulator MraZ (143 aa).

SpoVT-AbrB domains are found at residues 5–47 (EYKH…PMHE) and 76–119 (ATEC…SSKR).

This sequence belongs to the MraZ family. As to quaternary structure, forms oligomers.

The protein resides in the cytoplasm. Its subcellular location is the nucleoid. This Halothermothrix orenii (strain H 168 / OCM 544 / DSM 9562) protein is Transcriptional regulator MraZ.